Here is a 30-residue protein sequence, read N- to C-terminus: Urease subunit alpha (30 aa).

The protein belongs to the metallo-dependent hydrolases superfamily. Urease alpha subunit family. As to quaternary structure, heterotrimer of UreA (gamma), UreB (beta) and UreC (alpha) subunits. Three heterotrimers associate to form the active enzyme. Ni cation is required as a cofactor.

The protein localises to the cytoplasm. The catalysed reaction is urea + 2 H2O + H(+) = hydrogencarbonate + 2 NH4(+). It participates in nitrogen metabolism; urea degradation; CO(2) and NH(3) from urea (urease route): step 1/1. This Escherichia coli protein is Urease subunit alpha (ureC).